Consider the following 474-residue polypeptide: ATP synthase subunit beta (474 aa).

151–158 is a binding site for ATP; that stretch reads GGAGVGKT.

Belongs to the ATPase alpha/beta chains family. As to quaternary structure, F-type ATPases have 2 components, CF(1) - the catalytic core - and CF(0) - the membrane proton channel. CF(1) has five subunits: alpha(3), beta(3), gamma(1), delta(1), epsilon(1). CF(0) has three main subunits: a(1), b(2) and c(9-12). The alpha and beta chains form an alternating ring which encloses part of the gamma chain. CF(1) is attached to CF(0) by a central stalk formed by the gamma and epsilon chains, while a peripheral stalk is formed by the delta and b chains.

The protein resides in the cell inner membrane. It carries out the reaction ATP + H2O + 4 H(+)(in) = ADP + phosphate + 5 H(+)(out). In terms of biological role, produces ATP from ADP in the presence of a proton gradient across the membrane. The catalytic sites are hosted primarily by the beta subunits. The polypeptide is ATP synthase subunit beta (Paracoccus denitrificans (strain Pd 1222)).